A 177-amino-acid chain; its full sequence is MKIVGDSEHFKQPYDSDEEYVSKTEDKRDCEAAQKVGMELVSLSKTQLDKIELDEHLYDSIQQAHKIKPKTEAYRRHMQYIGKLMRHVDVEPIKAALAVVLNKNSNETAKLQIFEKMRERLLSQGDSEIQTLVEHYPQLDRQKLRTLVRQATKELAKGPESKSSKELFKYLRSEIQD.

The disordered stretch occupies residues 1–26 (MKIVGDSEHFKQPYDSDEEYVSKTED).

Belongs to the DarP family.

The protein localises to the cytoplasm. In terms of biological role, member of a network of 50S ribosomal subunit biogenesis factors which assembles along the 30S-50S interface, preventing incorrect 23S rRNA structures from forming. Promotes peptidyl transferase center (PTC) maturation. The polypeptide is Dual-action ribosomal maturation protein DarP (Shewanella sp. (strain MR-4)).